A 716-amino-acid chain; its full sequence is Ciliary WD repeat-containing protein ctxp80 (716 aa).

Positions 1-53 (MGCGGSSGASDPSSEKINWNNAEIHDEFKQEQKKAGAKRKAFDKTTGKAVEKE) are disordered. Residues 8–21 (GASDPSSEKINWNN) show a composition bias toward polar residues. Over residues 23-53 (EIHDEFKQEQKKAGAKRKAFDKTTGKAVEKE) the composition is skewed to basic and acidic residues. WD repeat units follow at residues 167-208 (YHTN…KKGR), 213-254 (KGGR…QVKK), 257-297 (SGPD…FKKK), 305-343 (GKPT…STYD), 345-382 (HGKG…AEKT), 424-462 (HSDG…STAL), 529-568 (DSGE…KLGT), 571-610 (AHNS…QDPS), 639-678 (TDGT…GATP), and 683-715 (GHSE…QWKK).

Belongs to the WD repeat EMAP family.

This chain is Ciliary WD repeat-containing protein ctxp80, found in Euplotoides octocarinatus (Freshwater ciliate).